Reading from the N-terminus, the 360-residue chain is Peptide chain release factor 1 (360 aa).

Gln-237 carries the post-translational modification N5-methylglutamine.

This sequence belongs to the prokaryotic/mitochondrial release factor family. In terms of processing, methylated by PrmC. Methylation increases the termination efficiency of RF1.

The protein resides in the cytoplasm. Peptide chain release factor 1 directs the termination of translation in response to the peptide chain termination codons UAG and UAA. This Pseudomonas putida (strain ATCC 700007 / DSM 6899 / JCM 31910 / BCRC 17059 / LMG 24140 / F1) protein is Peptide chain release factor 1.